Reading from the N-terminus, the 115-residue chain is NADH-ubiquinone oxidoreductase chain 3 (115 aa).

Helical transmembrane passes span 3 to 23, 55 to 75, and 84 to 104; these read FVLA…LTFW, FFLV…LLPL, and LPLM…GLTY.

Belongs to the complex I subunit 3 family. In terms of assembly, core subunit of respiratory chain NADH dehydrogenase (Complex I) which is composed of 45 different subunits. Interacts with TMEM186. Interacts with TMEM242.

The protein resides in the mitochondrion inner membrane. It catalyses the reaction a ubiquinone + NADH + 5 H(+)(in) = a ubiquinol + NAD(+) + 4 H(+)(out). Functionally, core subunit of the mitochondrial membrane respiratory chain NADH dehydrogenase (Complex I) which catalyzes electron transfer from NADH through the respiratory chain, using ubiquinone as an electron acceptor. Essential for the catalytic activity of complex I. In Pongo pygmaeus (Bornean orangutan), this protein is NADH-ubiquinone oxidoreductase chain 3.